Here is a 161-residue protein sequence, read N- to C-terminus: Xanthine-guanine phosphoribosyltransferase (161 aa).

5-phospho-alpha-D-ribose 1-diphosphate is bound by residues 41–42 and 95–103; these read RG and DDLVDTGNT. Asp-96 provides a ligand contact to Mg(2+). Asp-99 and Ile-142 together coordinate guanine. Xanthine is bound by residues Asp-99 and Ile-142. GMP contacts are provided by residues 99–103 and 141–142; these read DTGNT and WI.

Belongs to the purine/pyrimidine phosphoribosyltransferase family. XGPT subfamily. In terms of assembly, homotetramer. Mg(2+) is required as a cofactor.

The protein resides in the cell inner membrane. The catalysed reaction is GMP + diphosphate = guanine + 5-phospho-alpha-D-ribose 1-diphosphate. The enzyme catalyses XMP + diphosphate = xanthine + 5-phospho-alpha-D-ribose 1-diphosphate. It catalyses the reaction IMP + diphosphate = hypoxanthine + 5-phospho-alpha-D-ribose 1-diphosphate. The protein operates within purine metabolism; GMP biosynthesis via salvage pathway; GMP from guanine: step 1/1. It functions in the pathway purine metabolism; XMP biosynthesis via salvage pathway; XMP from xanthine: step 1/1. Its function is as follows. Purine salvage pathway enzyme that catalyzes the transfer of the ribosyl-5-phosphate group from 5-phospho-alpha-D-ribose 1-diphosphate (PRPP) to the N9 position of the 6-oxopurines guanine and xanthine to form the corresponding ribonucleotides GMP (guanosine 5'-monophosphate) and XMP (xanthosine 5'-monophosphate), with the release of PPi. To a lesser extent, also acts on hypoxanthine. The chain is Xanthine-guanine phosphoribosyltransferase from Idiomarina loihiensis (strain ATCC BAA-735 / DSM 15497 / L2-TR).